Consider the following 110-residue polypeptide: MSHNVEKITDAKVFKEKVQEGSGPVIVDCSATWCGPCKAISPVFQRLSTSEEFKNAKFYEIDVDELSEVAAELGVRAMPTFMFFKDGQKVNEVVGANPPALEAAIKAHVA.

In terms of domain architecture, Thioredoxin spans 1–110; sequence MSHNVEKITD…LEAAIKAHVA (110 aa). Catalysis depends on nucleophile residues Cys-34 and Cys-37. Cys-34 and Cys-37 are disulfide-bonded.

It belongs to the thioredoxin family.

In terms of biological role, participates in various redox reactions through the reversible oxidation of its active center dithiol to a disulfide and catalyzes dithiol-disulfide exchange reactions. This Aspergillus fumigatus (Neosartorya fumigata) protein is Thioredoxin Asp f 29.